Reading from the N-terminus, the 288-residue chain is MKYVFIEKHQAEFSIKAMCRVLRVARSGWYTWCQRRTRISTRQQFRQHCDSVVLAAFTRSKQRYGAPRLTDELRAQGYPFNVKTVAASLRRQGLRAKASRKFSPVSYRAHGLPVSENLLEQDFYASGPNQKWAGDITYLRTDEGWLYLAVVIDLWSRAVIGWSMSPRMTAQLACDALQMALWRRKRPRNVIVHTDRGGQYCSADYQAQLKRHNLRGSMSAKGCCYDNACVESFFHSLKVECIHGEHFISREIMRATVFNYIECDYNRWRRHSWCGGLSPEQFENKNLA.

An Integrase catalytic domain is found at 124–287; that stretch reads YASGPNQKWA…SPEQFENKNL (164 aa).

Belongs to the transposase IS3/IS150/IS904 family.

Involved in the transposition of the insertion sequence IS3. This chain is Transposase InsF for insertion sequence IS3A (insF1), found in Escherichia coli (strain K12).